The primary structure comprises 461 residues: Pyruvate kinase (461 aa).

Arginine 46 is a substrate binding site. K(+) contacts are provided by asparagine 48 and aspartate 80. Position 48-51 (48-51 (NLAH)) interacts with ATP. ATP contacts are provided by arginine 87 and lysine 165. Glutamate 232 is a binding site for Mg(2+). 3 residues coordinate substrate: glycine 255, aspartate 256, and threonine 288. Aspartate 256 contributes to the Mg(2+) binding site.

This sequence belongs to the pyruvate kinase family. In terms of assembly, homotetramer. It depends on a divalent metal cation as a cofactor.

The enzyme catalyses pyruvate + ATP = phosphoenolpyruvate + ADP + H(+). It participates in carbohydrate degradation; glycolysis; pyruvate from D-glyceraldehyde 3-phosphate: step 5/5. Not activated by classical allosteric effectors. The chain is Pyruvate kinase (pyk) from Pyrobaculum aerophilum (strain ATCC 51768 / DSM 7523 / JCM 9630 / CIP 104966 / NBRC 100827 / IM2).